A 238-amino-acid chain; its full sequence is Ribonuclease PH (238 aa).

Phosphate is bound by residues arginine 86 and 124-126 (GTR).

Belongs to the RNase PH family. In terms of assembly, homohexameric ring arranged as a trimer of dimers.

The catalysed reaction is tRNA(n+1) + phosphate = tRNA(n) + a ribonucleoside 5'-diphosphate. Its function is as follows. Phosphorolytic 3'-5' exoribonuclease that plays an important role in tRNA 3'-end maturation. Removes nucleotide residues following the 3'-CCA terminus of tRNAs; can also add nucleotides to the ends of RNA molecules by using nucleoside diphosphates as substrates, but this may not be physiologically important. Probably plays a role in initiation of 16S rRNA degradation (leading to ribosome degradation) during starvation. The polypeptide is Ribonuclease PH (Brucella abortus (strain S19)).